The chain runs to 743 residues: Cytosolic neutral trehalase (743 aa).

Ca(2+) contacts are provided by Asp-95, Asp-97, Asn-99, Gln-101, and Asp-106. Substrate-binding positions include Arg-285, 292–293, Asn-329, 338–340, Glu-405, Arg-454, and Gly-457; these read WD and RSQ. Active-site proton donor/acceptor residues include Asp-459 and Glu-664.

Belongs to the glycosyl hydrolase 37 family. It depends on Ca(2+) as a cofactor.

Its subcellular location is the cytoplasm. The enzyme catalyses alpha,alpha-trehalose + H2O = alpha-D-glucose + beta-D-glucose. It participates in carbohydrate degradation. Functionally, hydrolyzes intracellular trehalose to glucose. The polypeptide is Cytosolic neutral trehalase (Beauveria bassiana (strain ARSEF 2860) (White muscardine disease fungus)).